We begin with the raw amino-acid sequence, 201 residues long: Probable thymidylate kinase (201 aa).

10-17 contacts ATP; the sequence is GIDGSGKS.

Belongs to the thymidylate kinase family.

It carries out the reaction dTMP + ATP = dTDP + ADP. This is Probable thymidylate kinase from Methanococcoides burtonii (strain DSM 6242 / NBRC 107633 / OCM 468 / ACE-M).